The primary structure comprises 557 residues: Venom carboxylesterase-6 (557 aa).

An N-terminal signal peptide occupies residues 1–21 (MYMLKLSYILLFLGFVKFSWQ). Cys-88 and Cys-108 are disulfide-bonded. A glycan (N-linked (GlcNAc...) asparagine) is linked at Asn-145. Ser-212 (acyl-ester intermediate) is an active-site residue. Cys-264 and Cys-275 form a disulfide bridge. Glu-341 serves as the catalytic Charge relay system. Asn-374 is a glycosylation site (N-linked (GlcNAc...) asparagine). Catalysis depends on His-464, which acts as the Charge relay system. N-linked (GlcNAc...) asparagine glycans are attached at residues Asn-478, Asn-528, and Asn-542.

The protein belongs to the type-B carboxylesterase/lipase family. In terms of tissue distribution, expressed by the venom gland.

It is found in the secreted. It carries out the reaction a carboxylic ester + H2O = an alcohol + a carboxylate + H(+). This Apis mellifera (Honeybee) protein is Venom carboxylesterase-6.